The following is a 394-amino-acid chain: MTERHLFTSESVSEGHPDKVADQVSDAILDAILEKDPMARVACETSVTTGLVLVFGEISTTAYVDIQKIVRQTVKDIGYTRAKYGFDGETVAVLVAIDEQSPDIAQGVDAALEVRDQDEKDDIGAGDQGLMFGFAVDETPELMPLPIALSHRLVRRLAELRKEKVLPYLRPDAKSQVTVEYDDQGQPQRVDTIVISTQHDDETTLEQIEKDIKEQVINEVIPHELLDDETKYFINPTGRFVIGGPQGDAGLTGRKIIVDTYGGYARHGGGAFSGKDATKVDRSASYAARYIAKNIVAAGLAKKVEVQLAYAIGVAQPVSISINTFGTSDLPESKLIEAVRKNFDLRPAGIIEMLDLRRPIYKQTAAYGHFGRTDIDLPWEQTDKVEALKASLAE.

Histidine 16 serves as a coordination point for ATP. Mg(2+) is bound at residue aspartate 18. Glutamate 44 serves as a coordination point for K(+). L-methionine is bound by residues glutamate 57 and glutamine 100. The tract at residues 100 to 110 (QSPDIAQGVDA) is flexible loop. Residues 172–174 (DAK), 239–240 (RF), aspartate 248, 254–255 (RK), alanine 271, and lysine 275 contribute to the ATP site. Residue aspartate 248 participates in L-methionine binding. Lysine 279 serves as a coordination point for L-methionine.

This sequence belongs to the AdoMet synthase family. As to quaternary structure, homotetramer; dimer of dimers. The cofactor is Mg(2+). Requires K(+) as cofactor.

It is found in the cytoplasm. It carries out the reaction L-methionine + ATP + H2O = S-adenosyl-L-methionine + phosphate + diphosphate. The protein operates within amino-acid biosynthesis; S-adenosyl-L-methionine biosynthesis; S-adenosyl-L-methionine from L-methionine: step 1/1. In terms of biological role, catalyzes the formation of S-adenosylmethionine (AdoMet) from methionine and ATP. The overall synthetic reaction is composed of two sequential steps, AdoMet formation and the subsequent tripolyphosphate hydrolysis which occurs prior to release of AdoMet from the enzyme. The chain is S-adenosylmethionine synthase from Enterococcus faecalis (strain ATCC 700802 / V583).